The chain runs to 213 residues: Probable thymidylate kinase 2 (213 aa).

10 to 17 (GIDGSGKS) contacts ATP.

It belongs to the thymidylate kinase family.

The catalysed reaction is dTMP + ATP = dTDP + ADP. The protein is Probable thymidylate kinase 2 (tmk2) of Saccharolobus solfataricus (strain ATCC 35092 / DSM 1617 / JCM 11322 / P2) (Sulfolobus solfataricus).